The sequence spans 141 residues: Hemoglobin subunit alpha-A (141 aa).

The region spanning 1–141 is the Globin domain; the sequence is VLSAADKTNV…VGAVLTAKYR (141 aa). Residue His58 coordinates O2. His87 contacts heme b.

The protein belongs to the globin family. As to quaternary structure, heterotetramer of two alpha chains and two beta chains. In terms of tissue distribution, red blood cells.

Its function is as follows. Involved in oxygen transport from the lung to the various peripheral tissues. This Cygnus olor (Mute swan) protein is Hemoglobin subunit alpha-A (HBAA).